We begin with the raw amino-acid sequence, 141 residues long: Hemoglobin subunit alpha-1 (141 aa).

The 141-residue stretch at 1 to 141 (VLSGSDKNNV…VGNVLTAKYR (141 aa)) folds into the Globin domain. Histidine 58 is an O2 binding site. Histidine 87 contacts heme b.

It belongs to the globin family. Heterotetramer of two alpha chains and two beta chains. In terms of tissue distribution, red blood cells.

In terms of biological role, involved in oxygen transport from the lung to the various peripheral tissues. This is Hemoglobin subunit alpha-1 from Stercorarius maccormicki (South polar skua).